We begin with the raw amino-acid sequence, 1482 residues long: Chromosome partition protein MukB (1482 aa).

34–41 (GGNGAGKS) provides a ligand contact to ATP. Residues 333–665 (ASDHLNLVQT…LEKQIERLSQ (333 aa)) are a coiled coil. The segment at 666 to 783 (PSGAEDSRMI…ELPLFGRAAR (118 aa)) is flexible hinge. Coiled coils occupy residues 784 to 1116 (ENRL…AKAG) and 1209 to 1260 (VDAI…MLNQ).

This sequence belongs to the SMC family. MukB subfamily. As to quaternary structure, homodimerization via its hinge domain. Binds to DNA via its C-terminal region. Interacts, and probably forms a ternary complex, with MukE and MukF via its C-terminal region. The complex formation is stimulated by calcium or magnesium. Interacts with tubulin-related protein FtsZ.

The protein localises to the cytoplasm. It localises to the nucleoid. Functionally, plays a central role in chromosome condensation, segregation and cell cycle progression. Functions as a homodimer, which is essential for chromosome partition. Involved in negative DNA supercoiling in vivo, and by this means organize and compact chromosomes. May achieve or facilitate chromosome segregation by condensation DNA from both sides of a centrally located replisome during cell division. This Photorhabdus laumondii subsp. laumondii (strain DSM 15139 / CIP 105565 / TT01) (Photorhabdus luminescens subsp. laumondii) protein is Chromosome partition protein MukB.